The sequence spans 347 residues: Quinolinate synthase (347 aa).

2 residues coordinate iminosuccinate: histidine 47 and serine 68. Cysteine 113 contacts [4Fe-4S] cluster. Iminosuccinate is bound by residues 139–141 and serine 156; that span reads YAN. Cysteine 200 contributes to the [4Fe-4S] cluster binding site. Residues 226 to 228 and threonine 243 each bind iminosuccinate; that span reads HPE. Residue cysteine 297 coordinates [4Fe-4S] cluster.

Belongs to the quinolinate synthase family. Type 1 subfamily. Requires [4Fe-4S] cluster as cofactor.

It is found in the cytoplasm. The enzyme catalyses iminosuccinate + dihydroxyacetone phosphate = quinolinate + phosphate + 2 H2O + H(+). It participates in cofactor biosynthesis; NAD(+) biosynthesis; quinolinate from iminoaspartate: step 1/1. Functionally, catalyzes the condensation of iminoaspartate with dihydroxyacetone phosphate to form quinolinate. The protein is Quinolinate synthase of Escherichia coli O127:H6 (strain E2348/69 / EPEC).